The sequence spans 514 residues: Anthranilate synthase component 1 (514 aa).

Residues threonine 40 and 291–293 contribute to the L-tryptophan site; that span reads PYM. A chorismate-binding site is contributed by 328-329; sequence GT. Glutamate 361 is a Mg(2+) binding site. Chorismate contacts are provided by residues tyrosine 449, arginine 469, 482 to 484, and glycine 484; that span reads GAG. A Mg(2+)-binding site is contributed by glutamate 497.

Belongs to the anthranilate synthase component I family. Heterotetramer consisting of two non-identical subunits: a beta subunit (TrpG) and a large alpha subunit (TrpE). Mg(2+) serves as cofactor.

The catalysed reaction is chorismate + L-glutamine = anthranilate + pyruvate + L-glutamate + H(+). Its pathway is amino-acid biosynthesis; L-tryptophan biosynthesis; L-tryptophan from chorismate: step 1/5. Its activity is regulated as follows. Feedback inhibited by tryptophan. Its function is as follows. Part of a heterotetrameric complex that catalyzes the two-step biosynthesis of anthranilate, an intermediate in the biosynthesis of L-tryptophan. In the first step, the glutamine-binding beta subunit (TrpG) of anthranilate synthase (AS) provides the glutamine amidotransferase activity which generates ammonia as a substrate that, along with chorismate, is used in the second step, catalyzed by the large alpha subunit of AS (TrpE) to produce anthranilate. In the absence of TrpG, TrpE can synthesize anthranilate directly from chorismate and high concentrations of ammonia. This is Anthranilate synthase component 1 (trpE) from Buchnera aphidicola subsp. Rhopalosiphum maidis.